The sequence spans 785 residues: Solute carrier family 45 member 4 (785 aa).

Residues 1–43 are disordered; that stretch reads MKMAPQNADSESMQVQELPVPLPDPQKPRDPEAETQEETTSEG. A run of 6 helical transmembrane segments spans residues 64-84, 87-107, 124-144, 156-176, 197-217, and 234-254; these read EFCY…IGLP, YYSL…PLIG, ILAL…GSAI, PIGI…ADAT, LNIH…LGGL, and VLFF…LFSI. Disordered regions lie at residues 259–309 and 401–430; these read YSPQ…VQSE and KVPN…SGSM. Phosphoserine is present on residues Ser-442 and Ser-472. Positions 478-505 are disordered; that stretch reads DLQQRQRSRHRNQSGATASSGDTESEEG. The span at 490–499 shows a compositional bias: low complexity; that stretch reads QSGATASSGD. Phosphoserine is present on Ser-502. 6 helical membrane-spanning segments follow: residues 525–545, 577–597, 609–629, 631–651, 683–703, and 709–729; these read LMWL…EAVF, MGCW…ALLQ, IIYM…AMFP, VYVA…ISYC, ILSC…GGVV, and IVVI…TATF. Residues 741–772 form a disordered region; the sequence is KEEQKGLSSGPAGEGEGGAGSEKPTVLKLSRK. A Phosphoserine modification is found at Ser-749.

It belongs to the glycoside-pentoside-hexuronide (GPH) cation symporter transporter (TC 2.A.2) family. Ubiquitously expressed.

Its subcellular location is the membrane. It carries out the reaction sucrose(out) + H(+)(out) = sucrose(in) + H(+)(in). In terms of biological role, proton-associated sucrose transporter. May be able to transport also glucose and fructose. The sequence is that of Solute carrier family 45 member 4 (Slc45a4) from Mus musculus (Mouse).